We begin with the raw amino-acid sequence, 395 residues long: ATP-dependent RNA helicase eIF4A (395 aa).

Residue Ser-2 is modified to N-acetylserine. The Q motif motif lies at 22 to 50 (YKFDDMELDENLLRGVFGYGFEEPSAIQQ). The 170-residue stretch at 53–222 (IMPIIEGHDV…TKFMRNPVRI (170 aa)) folds into the Helicase ATP-binding domain. ATP is bound at residue 66–73 (AQSGTGKT). Thr-73 bears the Phosphothreonine mark. Ser-77 and Ser-129 each carry phosphoserine. Thr-146 is subject to Phosphothreonine. Residues 170–173 (DEAD) carry the DEAD box motif. In terms of domain architecture, Helicase C-terminal spans 233–394 (GIKQFYVNVE…ELPSDIATLL (162 aa)).

This sequence belongs to the DEAD box helicase family. eIF4A subfamily. In terms of assembly, component of the eIF4F complex, which composition varies with external and internal environmental conditions. It is composed of at least eIF4A, eIF4E and eIF4G.

It is found in the cytoplasm. It catalyses the reaction ATP + H2O = ADP + phosphate + H(+). ATP-dependent RNA helicase which is a subunit of the eIF4F complex involved in cap recognition and is required for mRNA binding to ribosome. In the current model of translation initiation, eIF4A unwinds RNA secondary structures in the 5'-UTR of mRNAs which is necessary to allow efficient binding of the small ribosomal subunit, and subsequent scanning for the initiator codon. The chain is ATP-dependent RNA helicase eIF4A (TIF1) from Saccharomyces cerevisiae (strain YJM789) (Baker's yeast).